The sequence spans 75 residues: Penaeidin-3l (75 aa).

The signal sequence occupies residues 1-19; sequence MRLVVCLVFLASFALVCQG. Gln-20 carries the pyrrolidone carboxylic acid modification. 3 disulfides stabilise this stretch: Cys-44/Cys-59, Cys-48/Cys-66, and Cys-60/Cys-67. Serine amide is present on Ser-74.

It belongs to the penaeidin family.

It is found in the cytoplasmic granule. In terms of biological role, antibacterial and antifungal activity. Presents chitin-binding activity. This Penaeus setiferus (Atlantic white shrimp) protein is Penaeidin-3l.